The following is a 360-amino-acid chain: Serine/threonine-protein kinase SAPK4 (360 aa).

In terms of domain architecture, Protein kinase spans 4–260 (YEAVRDIGSG…MKEIKSHPWF (257 aa)). Residues 10–18 (IGSGNFGVA) and lysine 33 each bind ATP. Residue aspartate 123 is the Proton acceptor of the active site. A disordered region spans residues 303–360 (TMPKSSRTGYWSDAGSDEEEKEEEERPEENEEEEEDEYDKRVKEVHASGELRMSSLRI). The segment covering 317-339 (GSDEEEKEEEERPEENEEEEEDE) has biased composition (acidic residues). A compositionally biased stretch (basic and acidic residues) spans 340 to 351 (YDKRVKEVHASG).

The protein belongs to the protein kinase superfamily. Ser/Thr protein kinase family. May be phosphorylated. In terms of tissue distribution, expressed in leaf blades, leaf sheaths and roots. Expressed in shoots and roots of young seedlings.

The catalysed reaction is L-seryl-[protein] + ATP = O-phospho-L-seryl-[protein] + ADP + H(+). It catalyses the reaction L-threonyl-[protein] + ATP = O-phospho-L-threonyl-[protein] + ADP + H(+). With respect to regulation, activated by hyperosmotic stress. Its function is as follows. May play a role in signal transduction of hyperosmotic response. The chain is Serine/threonine-protein kinase SAPK4 (SAPK4) from Oryza sativa subsp. japonica (Rice).